Reading from the N-terminus, the 208-residue chain is MTKGILGKKVGMTQIFTEAGELIPVTVIEATPNVVLQVKTVETDGYNAIQVGFDDKREVLSNKPAKGHVAKANTAPKRFIREFKNVEGLEVGAEITVETFAAGDVVDVTGTSKGKGFQGVIKRHGQSRGPMAHGSRYHRRPGSMGPVAPNRVFKGKNLAGRMGGDRVTIQNLEVVQVVPEKNVILIKGNVPGAKKSLITIKSAVKAGK.

The tract at residues 116–148 is disordered; the sequence is GFQGVIKRHGQSRGPMAHGSRYHRRPGSMGPVA.

This sequence belongs to the universal ribosomal protein uL3 family. In terms of assembly, part of the 50S ribosomal subunit. Forms a cluster with proteins L14 and L19.

One of the primary rRNA binding proteins, it binds directly near the 3'-end of the 23S rRNA, where it nucleates assembly of the 50S subunit. The polypeptide is Large ribosomal subunit protein uL3 (Streptococcus pneumoniae (strain Hungary19A-6)).